The following is a 546-amino-acid chain: MAAVSLRLGDLVWGKLGRYPPWPGKIVNPPKDLKKPRGKKCFFVKFFGTEDHAWIKVEQLKPYHAHKEEMIKINKGKRFQQAVDAVEEFLRRAKGKDQTSSHTSADDKNRRNSSEERSRPNSGDEKRKLSLSEGKVKKNMGEGKKRVTSGSADRGSKCLKRAQEQSPRKRGRPPKDEKDLTIPESSTVKGMMAGPMAAFKWQPTATEPVKDADPHFHHFLLSQTEKPAVCYQAITKKLKICEEETGSTSIQAADSTAVNGSITPTDKKIGFLGLGLMGSGIVSNLLKMGHTVTVWNRTAEKEGARLGRTPAEVVSTCDITFACVSDPKAAKDLVLGPSGVLQGIRPGKCYVDMSTVDADTVTELAQVIVSRGGRFLEAPVSGNQQLSNDGMLVILAAGDRGLYEDCSSCFQAMGKTSFFLGEVGNAAKMMLIVNMVQGSFMATIAEGLTLAQVTGQSQQTLLDILNQGQLASIFLDQKCQNILQGNFKPDFYLKYIQKDLRLAIALGDAVNHPTPMAAAANEVYKRAKALDQSDNDMSAVYRAYIH.

One can recognise a PWWP domain in the interval 8 to 66 (LGDLVWGKLGRYPPWPGKIVNPPKDLKKPRGKKCFFVKFFGTEDHAWIKVEQLKPYHAH). 2 stretches are compositionally biased toward basic and acidic residues: residues 91–145 (RRAK…EGKK) and 161–181 (RAQE…KDLT). The disordered stretch occupies residues 91–187 (RRAKGKDQTS…KDLTIPESST (97 aa)). At serine 130 the chain carries Phosphoserine. A Glycyl lysine isopeptide (Lys-Gly) (interchain with G-Cter in SUMO2) cross-link involves residue lysine 135. A Phosphoserine modification is found at serine 166. The segment at residues 167–179 (PRKRGRPPKDEKD) is a DNA-binding region (a.T hook). Residues lysine 175, lysine 178, lysine 200, and lysine 210 each participate in a glycyl lysine isopeptide (Lys-Gly) (interchain with G-Cter in SUMO2) cross-link. An interaction with histone H3 region spans residues 213–216 (DPHF). Residues 215-224 (HFHHFLLSQT) form an interaction with KDM1B region. Residues lysine 226, lysine 236, lysine 239, and lysine 268 each participate in a glycyl lysine isopeptide (Lys-Gly) (interchain with G-Cter in SUMO2) cross-link. The tract at residues 260 to 546 (GSITPTDKKI…MSAVYRAYIH (287 aa)) is dehydrogenase domain. 270–284 (GFLGLGLMGSGIVSN) provides a ligand contact to NAD(+). Residue lysine 301 forms a Glycyl lysine isopeptide (Lys-Gly) (interchain with G-Cter in SUMO2) linkage. Threonine 355 and lysine 498 together coordinate NAD(+). Serine 533 carries the post-translational modification Phosphoserine.

The protein belongs to the HIBADH-related family. NP60 subfamily. As to quaternary structure, homotetramere. Interacts with MAPK14. Interacts with KDM1B at nucleosomes; this interaction stimulates H3K4me1 and H3K4me2 demethylation. Binds to mononucleosomes. Interacts with GATA4; the interaction is required for a synergistic activation of GATA4 target genes transcription.

Its subcellular location is the nucleus. It localises to the chromosome. Cytokine-like nuclear factor with chromatin gene reader activity involved in chromatin modification and regulation of gene expression. Acts as a nucleosome-destabilizing factor that is recruited to genes during transcriptional activation. Recognizes and binds histone H3 without a preference for specific epigenetic markers and also binds DNA. Interacts with KDM1B and promotes its histone demethylase activity by facilitating the capture of H3 tails, they form a multifunctional enzyme complex that modifies transcribed chromatin and facilitates Pol II transcription through nucleosomes. Stimulates the acetylation of 'Lys-56' of nucleosomal histone H3 (H3K56ac) by EP300. With GATA4, co-binds a defined set of heart development genes and coregulates their expression during cardiomyocyte differentiation. Regulates p38 MAP kinase activity by mediating stress activation of MAPK14/p38alpha and specifically regulating MAPK14 signaling. Indirectly promotes phosphorylation of MAPK14 and activation of ATF2. The phosphorylation of MAPK14 requires upstream activity of MAP2K4 and MAP2K6. This chain is Cytokine-like nuclear factor N-PAC, found in Mus musculus (Mouse).